A 280-amino-acid chain; its full sequence is Myb family transcription factor PHL11 (280 aa).

Positions 20 to 80 (RDPKPRLRWT…HLQKYRLGQQ (61 aa)) constitute an HTH myb-type domain. The H-T-H motif DNA-binding region spans 51-76 (PKSVLKLMGLKGLTLYHLKSHLQKYR). Residues 77 to 98 (LGQQQGKKQNRTEQNKENAGSS) are disordered. The interval 129-149 (AEAMRHQVDAQQRFQEQLEVQ) is coiled coil. Positions 142–147 (FQEQLE) match the LHEQLE motif.

This sequence belongs to the MYB-CC family.

The protein localises to the nucleus. The polypeptide is Myb family transcription factor PHL11 (Arabidopsis thaliana (Mouse-ear cress)).